The chain runs to 743 residues: MSLIRTRKKIVSSAIASSLSMIATTAMAQEAVSQLPTIHTKATQEESLKVDQSANSKFVAPLLDTPKSVSVISKQLIEDTKVTTLADALRTVPGITLGAGEGGNPNGDRPFIRGYSSESSMYIDGIRNSTSQNREMFAVEQVEVTKGSASAMGGAGSVGGSINMISKVAKKGDFLEGSVAAGTDNYQRITLDGNKDFGNGIAARVAVLGHQNEKAGQSNGAEYKRVGIAPSITFGLDTPTRATLSYYYLQTDDKPDSGIPYWDSSLGKAQGKPAEVKQGTYYGWKDRDFQKQENHIGTIKLEHDLTDNITITNTAMYAKSKNDYVWTNPDDSKGNVGKGLVWHRLNSAITDSETFTDQLALTGKFDTGFLKHRFNVGAEYSKQKTDKGGYNIIDAKGNVSSTGFYSDCSDLSTNWCTSLNGPTQKPFVDRLQARPDFDATVESTSVYLLDNIEITPKWLLDLGLRWDKFEAEQNFLATSSAAAYTAKNNSDFVTYQAGITFKPTENGSIYTSYATSASPVGLNAGWGDNSETINANNQMIDPEEAQTFEIGTKWDFLDNHLNLTAAIFRTEKQNTRVQIDPTTYANVGESKVDGFELGLNGEITDKWNISAGYTYLDSELTKNGKSCRSGKCTDQSIYNGNQMPNVPKQAATLWTTYKVLPQLTVGAGAVYSDKVYGDVANTKWVPSYVRYDAMARYNVNKNVDLQLNINNLSDKRYFTKAYASHYATEAEGRSAVLAVNFKY.

The N-terminal stretch at 1–28 (MSLIRTRKKIVSSAIASSLSMIATTAMA) is a signal peptide. One can recognise a TBDR plug domain in the interval 61–167 (PLLDTPKSVS…VGGSINMISK (107 aa)). The 572-residue stretch at 172–743 (GDFLEGSVAA…SAVLAVNFKY (572 aa)) folds into the TBDR beta-barrel domain. 2 disulfide bridges follow: C408–C416 and C627–C632.

The protein belongs to the TonB-dependent receptor family.

It is found in the cell outer membrane. Functionally, probably involved in the initial step of iron uptake by binding iron chelating siderophores, thereby allowing extraction of iron from the environment. May bind the siderophore, ferric enterobactin, with micromolar affinity. The protein is Probable TonB-dependent siderophore receptor PiuA of Acinetobacter baumannii (strain ATCC 19606 / DSM 30007 / JCM 6841 / CCUG 19606 / CIP 70.34 / NBRC 109757 / NCIMB 12457 / NCTC 12156 / 81).